Here is a 95-residue protein sequence, read N- to C-terminus: Defensin-1 (95 aa).

A signal peptide spans 1-19; sequence MKIYFIVGLLFMAMVAIMA. The propeptide occupies 20–43; the sequence is APVEDEFEPLEHFENEERADRHRR. 3 disulfide bridges follow: Cys46/Cys74, Cys60/Cys79, and Cys64/Cys81. Phe94 carries the post-translational modification Phenylalanine amide.

Its subcellular location is the secreted. Found in royal jelly and in hemolymph, potent antibacterial protein against Gram-positive bacteria at low concentration. In Apis mellifera carnica (Carniolan honeybee), this protein is Defensin-1.